The chain runs to 251 residues: Probable transcriptional regulatory protein Franean1_5147 (251 aa).

The protein belongs to the TACO1 family.

The protein resides in the cytoplasm. This is Probable transcriptional regulatory protein Franean1_5147 from Parafrankia sp. (strain EAN1pec).